The following is a 541-amino-acid chain: Chaperonin GroEL (541 aa).

Residues 29 to 32 (TLGP), 86 to 90 (DGTTT), G413, 480 to 482 (NAA), and D496 each bind ATP.

This sequence belongs to the chaperonin (HSP60) family. In terms of assembly, forms a cylinder of 14 subunits composed of two heptameric rings stacked back-to-back. Interacts with the co-chaperonin GroES.

Its subcellular location is the cytoplasm. The enzyme catalyses ATP + H2O + a folded polypeptide = ADP + phosphate + an unfolded polypeptide.. In terms of biological role, together with its co-chaperonin GroES, plays an essential role in assisting protein folding. The GroEL-GroES system forms a nano-cage that allows encapsulation of the non-native substrate proteins and provides a physical environment optimized to promote and accelerate protein folding. The sequence is that of Chaperonin GroEL from Gardnerella vaginalis.